Here is a 317-residue protein sequence, read N- to C-terminus: Olfactory receptor 5AP2 (317 aa).

The Extracellular segment spans residues 1–32 (MVRSGKGIQNKNATEVTEFILLGLSDNPDLQG). N12 carries an N-linked (GlcNAc...) asparagine glycan. Residues 33–53 (VLFALFLIIYTMTLVGNLGMM) traverse the membrane as a helical segment. At 54–61 (ALIKIDRS) the chain is on the cytoplasmic side. The chain crosses the membrane as a helical span at residues 62-82 (LHTPMYFFLSSLSFVDASYSS). Topologically, residues 83–106 (SVTPKMLVNLMAEDKSISFNGCAT) are extracellular. The cysteines at positions 104 and 196 are disulfide-linked. The helical transmembrane segment at 107–127 (QFFFFGSFLGTECFLLAMMAY) threads the bilayer. Over 128–140 (DRYAAIWNPLLYP) the chain is Cytoplasmic. Residues 141-161 (VLMSGRICFMLVSTSFLAGFG) form a helical membrane-spanning segment. The Extracellular portion of the chain corresponds to 162–203 (NAAIHTGMTFRLSFCGSNKINHFYCDTPPLLKLSCSDTHING). Residues 204–224 (IVIMAFSSFNVISCVLIVLIS) form a helical membrane-spanning segment. At 225–244 (YLCILIAILKMPSAEGRHKA) the chain is on the cytoplasmic side. The helical transmembrane segment at 245–265 (FSTCASHLMAVTIFFGTILFM) threads the bilayer. The Extracellular portion of the chain corresponds to 266 to 278 (YLRPTSSYSMEQD). The helical transmembrane segment at 279-299 (KVVSVFYTVVIPMLNPLIYSL) threads the bilayer. The Cytoplasmic segment spans residues 300–317 (KNKDVKKAVKKILHNYVV).

It belongs to the G-protein coupled receptor 1 family.

It is found in the cell membrane. Odorant receptor. This Mus musculus (Mouse) protein is Olfactory receptor 5AP2.